A 233-amino-acid polypeptide reads, in one-letter code: Adenosine 5'-phosphosulfate reductase (233 aa).

The [4Fe-4S] cluster site is built by Cys-120, Cys-121, Cys-203, and Cys-206. The Nucleophile; cysteine thiosulfonate intermediate role is filled by Cys-229.

It belongs to the PAPS reductase family. CysH subfamily. The cofactor is [4Fe-4S] cluster.

Its subcellular location is the cytoplasm. It catalyses the reaction [thioredoxin]-disulfide + sulfite + AMP + 2 H(+) = adenosine 5'-phosphosulfate + [thioredoxin]-dithiol. It functions in the pathway sulfur metabolism; hydrogen sulfide biosynthesis; sulfite from sulfate. Its function is as follows. Catalyzes the formation of sulfite from adenosine 5'-phosphosulfate (APS) using thioredoxin as an electron donor. In Bacillus velezensis (strain DSM 23117 / BGSC 10A6 / LMG 26770 / FZB42) (Bacillus amyloliquefaciens subsp. plantarum), this protein is Adenosine 5'-phosphosulfate reductase.